Reading from the N-terminus, the 304-residue chain is Putative S-adenosyl-L-methionine-dependent methyltransferase MAV_4236 (304 aa).

S-adenosyl-L-methionine is bound by residues aspartate 129 and 158-159; that span reads DL.

Belongs to the UPF0677 family.

Exhibits S-adenosyl-L-methionine-dependent methyltransferase activity. The protein is Putative S-adenosyl-L-methionine-dependent methyltransferase MAV_4236 of Mycobacterium avium (strain 104).